Reading from the N-terminus, the 510-residue chain is Amidophosphoribosyltransferase (510 aa).

C2 (nucleophile) is an active-site residue. Positions 2–239 (CGILGIVLAN…PGEAVIIPKN (238 aa)) constitute a Glutamine amidotransferase type-2 domain. Mg(2+) contacts are provided by D373 and D374.

It in the C-terminal section; belongs to the purine/pyrimidine phosphoribosyltransferase family. Requires Mg(2+) as cofactor.

The enzyme catalyses 5-phospho-beta-D-ribosylamine + L-glutamate + diphosphate = 5-phospho-alpha-D-ribose 1-diphosphate + L-glutamine + H2O. The protein operates within purine metabolism; IMP biosynthesis via de novo pathway; N(1)-(5-phospho-D-ribosyl)glycinamide from 5-phospho-alpha-D-ribose 1-diphosphate: step 1/2. In Saccharomyces cerevisiae (strain ATCC 204508 / S288c) (Baker's yeast), this protein is Amidophosphoribosyltransferase (ADE4).